The following is a 329-amino-acid chain: Glucosyl-3-phosphoglycerate synthase (329 aa).

UDP-alpha-D-glucose contacts are provided by residues 55–59 (PALDE), S86, K119, and 139–141 (DSD). D141 contacts Mn(2+). 189-192 (GRVT) is a binding site for (2R)-3-phosphoglycerate. Position 234 to 237 (234 to 237 (YGVE)) interacts with UDP-alpha-D-glucose. H263 contributes to the Mn(2+) binding site. Residue N265 participates in (2R)-3-phosphoglycerate binding.

Belongs to the glycosyltransferase 2 family. As to quaternary structure, homodimer. The cofactor is Mg(2+). Mn(2+) serves as cofactor.

The catalysed reaction is an NDP-alpha-D-glucose + (2R)-3-phosphoglycerate = (2R)-2-O-(alpha-D-glucopyranosyl)-3-phospho-glycerate + a ribonucleoside 5'-diphosphate + H(+). It catalyses the reaction (2R)-3-phosphoglycerate + UDP-alpha-D-glucose = (2R)-2-O-(alpha-D-glucopyranosyl)-3-phospho-glycerate + UDP + H(+). It carries out the reaction GDP-D-glucose + (2R)-3-phosphoglycerate = (2R)-2-O-(alpha-D-glucopyranosyl)-3-phospho-glycerate + GDP + H(+). In terms of biological role, involved in the biosynthesis of 6-O-methylglucose lipopolysaccarides (MGLPs). Catalyzes the transfer of the glucose moiety from UDP-alpha-D-glucose (UDP-Glc) to the position 2 of 3-phospho-D-glycerate (3-PGA) to form glucosyl-3-phosphoglycerate (GPG). To a lesser extent can also use GDP-Glc but not UDP-Gal or UDP-GlcNAc as the sugar donor. The protein is Glucosyl-3-phosphoglycerate synthase of Mycolicibacterium paratuberculosis (strain ATCC BAA-968 / K-10) (Mycobacterium paratuberculosis).